Reading from the N-terminus, the 249-residue chain is MPRKFFVGGNFKMNGNAESTTSIIKNLNSANLDKSVEVVVSPPALYLLQAREVANKEIGVAAQNVFDKPNGAFTGEISVQQLREANIDWTILGHSERRVILKETDEFIARKTKAAIEGGLQVIFCIGETLEEREANKTIDVVTRQLNAAAKELSKEQWAKVVIAYEPVWAIGTGKVATTEQAQEVHSAIRKWLKDAISAEAAENTRIIYGGSVSEKNCKDLAKEADIDGFLVGGASLKPAFVDIVNARL.

2 residues coordinate substrate: asparagine 10 and lysine 12. Histidine 94 functions as the Electrophile in the catalytic mechanism. Glutamate 166 functions as the Proton acceptor in the catalytic mechanism.

The protein belongs to the triosephosphate isomerase family. In terms of assembly, homodimer.

It carries out the reaction D-glyceraldehyde 3-phosphate = dihydroxyacetone phosphate. Its pathway is carbohydrate biosynthesis; gluconeogenesis. The protein operates within carbohydrate degradation; glycolysis; D-glyceraldehyde 3-phosphate from glycerone phosphate: step 1/1. The polypeptide is Triosephosphate isomerase (tpiA) (Emericella nidulans (strain FGSC A4 / ATCC 38163 / CBS 112.46 / NRRL 194 / M139) (Aspergillus nidulans)).